The sequence spans 165 residues: Phosphopantetheine adenylyltransferase (165 aa).

Ser8 lines the substrate pocket. ATP-binding positions include 8–9 (SF) and His16. Substrate-binding residues include Lys40, Thr72, and Arg86. Residues 87–89 (GLR), Glu97, and 122–128 (YSFLSSS) contribute to the ATP site.

It belongs to the bacterial CoaD family. In terms of assembly, homohexamer. Mg(2+) serves as cofactor.

Its subcellular location is the cytoplasm. The catalysed reaction is (R)-4'-phosphopantetheine + ATP + H(+) = 3'-dephospho-CoA + diphosphate. It participates in cofactor biosynthesis; coenzyme A biosynthesis; CoA from (R)-pantothenate: step 4/5. Reversibly transfers an adenylyl group from ATP to 4'-phosphopantetheine, yielding dephospho-CoA (dPCoA) and pyrophosphate. In Synechococcus sp. (strain WH7803), this protein is Phosphopantetheine adenylyltransferase.